The sequence spans 159 residues: Crossover junction endodeoxyribonuclease RuvC (159 aa).

Catalysis depends on residues aspartate 7, glutamate 67, and aspartate 139. Residues aspartate 7, glutamate 67, and aspartate 139 each coordinate Mg(2+).

Belongs to the RuvC family. Homodimer which binds Holliday junction (HJ) DNA. The HJ becomes 2-fold symmetrical on binding to RuvC with unstacked arms; it has a different conformation from HJ DNA in complex with RuvA. In the full resolvosome a probable DNA-RuvA(4)-RuvB(12)-RuvC(2) complex forms which resolves the HJ. Mg(2+) is required as a cofactor.

The protein localises to the cytoplasm. It catalyses the reaction Endonucleolytic cleavage at a junction such as a reciprocal single-stranded crossover between two homologous DNA duplexes (Holliday junction).. Its function is as follows. The RuvA-RuvB-RuvC complex processes Holliday junction (HJ) DNA during genetic recombination and DNA repair. Endonuclease that resolves HJ intermediates. Cleaves cruciform DNA by making single-stranded nicks across the HJ at symmetrical positions within the homologous arms, yielding a 5'-phosphate and a 3'-hydroxyl group; requires a central core of homology in the junction. The consensus cleavage sequence is 5'-(A/T)TT(C/G)-3'. Cleavage occurs on the 3'-side of the TT dinucleotide at the point of strand exchange. HJ branch migration catalyzed by RuvA-RuvB allows RuvC to scan DNA until it finds its consensus sequence, where it cleaves and resolves the cruciform DNA. In Thermosynechococcus vestitus (strain NIES-2133 / IAM M-273 / BP-1), this protein is Crossover junction endodeoxyribonuclease RuvC.